The sequence spans 906 residues: Probable dipeptidyl-aminopeptidase B (906 aa).

A compositionally biased stretch (acidic residues) spans Met-1–Glu-11. The segment at Met-1–Leu-33 is disordered. Over Met-1 to Arg-85 the chain is Cytoplasmic. A compositionally biased stretch (low complexity) spans Pro-21 to Leu-33. A helical; Signal-anchor for type II membrane protein membrane pass occupies residues Leu-86 to Ile-106. The Vacuolar segment spans residues Thr-107–His-906. N-linked (GlcNAc...) asparagine glycans are attached at residues Asn-338 and Asn-629. The active-site Charge relay system is Ser-743. Asn-797 carries an N-linked (GlcNAc...) asparagine glycan. Residues Asp-820 and His-853 each act as charge relay system in the active site.

This sequence belongs to the peptidase S9B family.

Its subcellular location is the vacuole membrane. The catalysed reaction is Release of an N-terminal dipeptide, Xaa-Yaa-|-Zaa-, from a polypeptide, preferentially when Yaa is Pro, provided Zaa is neither Pro nor hydroxyproline.. Type IV dipeptidyl-peptidase which removes N-terminal dipeptides sequentially from polypeptides having unsubstituted N-termini provided that the penultimate residue is proline. The sequence is that of Probable dipeptidyl-aminopeptidase B (dapB) from Emericella nidulans (strain FGSC A4 / ATCC 38163 / CBS 112.46 / NRRL 194 / M139) (Aspergillus nidulans).